Here is a 70-residue protein sequence, read N- to C-terminus: Small ribosomal subunit protein bS21 (70 aa).

The protein belongs to the bacterial ribosomal protein bS21 family.

The sequence is that of Small ribosomal subunit protein bS21 from Campylobacter hominis (strain ATCC BAA-381 / DSM 21671 / CCUG 45161 / LMG 19568 / NCTC 13146 / CH001A).